A 60-amino-acid polypeptide reads, in one-letter code: UPF0434 protein Vapar_2640 (60 aa).

It belongs to the UPF0434 family.

In Variovorax paradoxus (strain S110), this protein is UPF0434 protein Vapar_2640.